Here is a 535-residue protein sequence, read N- to C-terminus: Peptide chain release factor 3 (535 aa).

Residues 8–278 (ARRRTFAIIS…VDQAPAPGPR (271 aa)) enclose the tr-type G domain. GTP is bound by residues 17–24 (SHPDAGKT), 85–89 (DTPGH), and 139–142 (NKLD).

This sequence belongs to the TRAFAC class translation factor GTPase superfamily. Classic translation factor GTPase family. PrfC subfamily.

Its subcellular location is the cytoplasm. Increases the formation of ribosomal termination complexes and stimulates activities of RF-1 and RF-2. It binds guanine nucleotides and has strong preference for UGA stop codons. It may interact directly with the ribosome. The stimulation of RF-1 and RF-2 is significantly reduced by GTP and GDP, but not by GMP. The chain is Peptide chain release factor 3 from Bordetella bronchiseptica (strain ATCC BAA-588 / NCTC 13252 / RB50) (Alcaligenes bronchisepticus).